The chain runs to 159 residues: Ribosomal RNA large subunit methyltransferase H (159 aa).

Residues Leu76, Gly108, and 127 to 132 (FSPMTF) each bind S-adenosyl-L-methionine.

It belongs to the RNA methyltransferase RlmH family. Homodimer.

It is found in the cytoplasm. The enzyme catalyses pseudouridine(1915) in 23S rRNA + S-adenosyl-L-methionine = N(3)-methylpseudouridine(1915) in 23S rRNA + S-adenosyl-L-homocysteine + H(+). Its function is as follows. Specifically methylates the pseudouridine at position 1915 (m3Psi1915) in 23S rRNA. The chain is Ribosomal RNA large subunit methyltransferase H from Alkaliphilus oremlandii (strain OhILAs) (Clostridium oremlandii (strain OhILAs)).